The primary structure comprises 440 residues: Transposon Ty1-GR1 Gag polyprotein (440 aa).

The segment covering 1–16 has biased composition (low complexity); that stretch reads MESQQLSQHSHISHGS. 3 disordered regions span residues 1-93, 126-173, and 352-440; these read MESQ…MMTQ, PQSQ…RPPP, and GSRN…PGTY. Polar residues-rich tracts occupy residues 48 to 60, 71 to 93, and 127 to 152; these read TKANSQQTTTPAS, SPQTAQSHSPQNGPYPQQCMMTQ, and QSQFPQYPSSVGTPLSTPSPESGNTF. Residues 153-165 show a composition bias toward low complexity; it reads TDSSSADSDMTST. The interval 299–401 is RNA-binding; that stretch reads NNGIHINNKV…NSKSKTARAH (103 aa). A compositionally biased stretch (low complexity) spans 402–418; it reads NVSTSNNSPSTDNDSIS. Ser416 is subject to Phosphoserine. Polar residues predominate over residues 419-428; that stretch reads KSTTEPIQLN. Residues 429–440 show a composition bias toward basic and acidic residues; sequence NKHDLHLRPGTY.

In terms of assembly, homotrimer.

Its subcellular location is the cytoplasm. Functionally, capsid protein (CA) is the structural component of the virus-like particle (VLP), forming the shell that encapsulates the retrotransposons dimeric RNA genome. The particles are assembled from trimer-clustered units and there are holes in the capsid shells that allow for the diffusion of macromolecules. CA also has nucleocapsid-like chaperone activity, promoting primer tRNA(i)-Met annealing to the multipartite primer-binding site (PBS), dimerization of Ty1 RNA and initiation of reverse transcription. In Saccharomyces cerevisiae (strain ATCC 204508 / S288c) (Baker's yeast), this protein is Transposon Ty1-GR1 Gag polyprotein (TY1A-GR1).